Here is a 199-residue protein sequence, read N- to C-terminus: Recombination protein RecR (199 aa).

The C4-type zinc finger occupies 57–72; it reads CQQCRTFTEQNLCAIC. Residues 81 to 176 form the Toprim domain; that stretch reads GMICVVEMPV…KVSRIAHGVP (96 aa).

This sequence belongs to the RecR family.

May play a role in DNA repair. It seems to be involved in an RecBC-independent recombinational process of DNA repair. It may act with RecF and RecO. This is Recombination protein RecR from Psychromonas ingrahamii (strain DSM 17664 / CCUG 51855 / 37).